A 311-amino-acid polypeptide reads, in one-letter code: Olfactory receptor 8H1 (311 aa).

Over 1–25 (MGRRNNTNVPDFILTGLSDSEEVQM) the chain is Extracellular. N-linked (GlcNAc...) asparagine glycosylation occurs at Asn-5. Residues 26–46 (ALFILFLLIYLITMLGNVGMI) traverse the membrane as a helical segment. Residues 47-54 (LIIRLDLQ) lie on the Cytoplasmic side of the membrane. Residues 55–75 (LHTPMYFFLTHLSFIDLSYST) traverse the membrane as a helical segment. The Extracellular portion of the chain corresponds to 76-98 (VITPKTLANLLTSNYISFMGCFA). Cys-96 and Cys-188 are oxidised to a cystine. A helical transmembrane segment spans residues 99–119 (QMFFFVFLGAAECFLLSSMAY). Over 120 to 138 (DRYVAICSPLRYPVIMSKR) the chain is Cytoplasmic. A helical transmembrane segment spans residues 139 to 159 (LCCALVTGPYVISFINSFVNV). Topologically, residues 160–196 (VWMSRLHFCDSNVVRHFFCDTSPILALSCMDTYDIEI) are extracellular. Residues 197–216 (MIHILAGSTLMVSLITISAS) form a helical membrane-spanning segment. Over 217–236 (YVSILSTILKINSTSGKQKA) the chain is Cytoplasmic. The chain crosses the membrane as a helical span at residues 237–257 (LSTCASHLLGVTIFYGTMIFT). Topologically, residues 258 to 270 (YLKPRKSYSLGRD) are extracellular. The helical transmembrane segment at 271 to 291 (QVASVFYTIVIPMLNPLIYSL) threads the bilayer. The Cytoplasmic segment spans residues 292 to 311 (RNKEVKNALIRVMQRRQDSR).

The protein belongs to the G-protein coupled receptor 1 family.

It is found in the cell membrane. Its function is as follows. Odorant receptor. The sequence is that of Olfactory receptor 8H1 (OR8H1) from Homo sapiens (Human).